We begin with the raw amino-acid sequence, 224 residues long: Urease accessory protein UreF (224 aa).

This sequence belongs to the UreF family. As to quaternary structure, ureD, UreF and UreG form a complex that acts as a GTP-hydrolysis-dependent molecular chaperone, activating the urease apoprotein by helping to assemble the nickel containing metallocenter of UreC. The UreE protein probably delivers the nickel.

The protein localises to the cytoplasm. Functionally, required for maturation of urease via the functional incorporation of the urease nickel metallocenter. This is Urease accessory protein UreF from Pseudomonas putida (strain ATCC 700007 / DSM 6899 / JCM 31910 / BCRC 17059 / LMG 24140 / F1).